The chain runs to 169 residues: Phosphopantetheine adenylyltransferase (169 aa).

Substrate is bound at residue serine 10. ATP is bound by residues 10-11 (SF) and histidine 18. Residues lysine 42, threonine 79, and arginine 93 each coordinate substrate. Residues 94-96 (GLR), glutamate 104, and 129-135 (VRPITAT) contribute to the ATP site.

The protein belongs to the bacterial CoaD family. Homohexamer. Mg(2+) is required as a cofactor.

It is found in the cytoplasm. It catalyses the reaction (R)-4'-phosphopantetheine + ATP + H(+) = 3'-dephospho-CoA + diphosphate. Its pathway is cofactor biosynthesis; coenzyme A biosynthesis; CoA from (R)-pantothenate: step 4/5. Functionally, reversibly transfers an adenylyl group from ATP to 4'-phosphopantetheine, yielding dephospho-CoA (dPCoA) and pyrophosphate. The chain is Phosphopantetheine adenylyltransferase from Rhodopseudomonas palustris (strain TIE-1).